A 286-amino-acid chain; its full sequence is Ribosomal RNA small subunit methyltransferase A (286 aa).

S-adenosyl-L-methionine contacts are provided by asparagine 28, leucine 30, glycine 55, glutamate 77, aspartate 103, and asparagine 123.

It belongs to the class I-like SAM-binding methyltransferase superfamily. rRNA adenine N(6)-methyltransferase family. RsmA subfamily.

Its subcellular location is the cytoplasm. The catalysed reaction is adenosine(1518)/adenosine(1519) in 16S rRNA + 4 S-adenosyl-L-methionine = N(6)-dimethyladenosine(1518)/N(6)-dimethyladenosine(1519) in 16S rRNA + 4 S-adenosyl-L-homocysteine + 4 H(+). Specifically dimethylates two adjacent adenosines (A1518 and A1519) in the loop of a conserved hairpin near the 3'-end of 16S rRNA in the 30S particle. May play a critical role in biogenesis of 30S subunits. The sequence is that of Ribosomal RNA small subunit methyltransferase A from Rhodopseudomonas palustris (strain BisB18).